We begin with the raw amino-acid sequence, 338 residues long: MVVMAPRTLFLLLSGALTLTETWAGSHSMRYFSAAVSRPGRGEPRFIAMGYVDDTQFVWFDSDSACPRMEPRAPWVEQEGPEYWEEETRNTKAHAQTDRINLQTLRGYYNQSEASSHTLQWMIGCDLGSDGRLLRGYEQYAYDGKDYLALNEDLRSWTAADTAAQISKRKCEAANAAEQRRAYLEGTCVEWLHRYLENGKEMLQRADPPKTHVTHHPVFDYEATLRCWALGFYPAEIILTWQRDGEDQTQDVELVETRPAGDGTFQKWAAVVVPSGEEQRYTCHVQHEGLPEPLMLRWKQSSLPTIPIMGIVAGLVVLAAVVTGAAVAAVLWRKKSSD.

An N-terminal signal peptide occupies residues 1–24 (MVVMAPRTLFLLLSGALTLTETWA). The segment at 25–114 (GSHSMRYFSA…LRGYYNQSEA (90 aa)) is alpha-1. Residues 25–308 (GSHSMRYFSA…KQSSLPTIPI (284 aa)) are Extracellular-facing. Asn-110 carries an N-linked (GlcNAc...) asparagine glycan. An alpha-2 region spans residues 115–206 (SSHTLQWMIG…ENGKEMLQRA (92 aa)). Intrachain disulfides connect Cys-125–Cys-188 and Cys-227–Cys-283. The tract at residues 207–298 (DPPKTHVTHH…GLPEPLMLRW (92 aa)) is alpha-3. The Ig-like C1-type domain occupies 209–299 (PKTHVTHHPV…LPEPLMLRWK (91 aa)). A connecting peptide region spans residues 299-308 (KQSSLPTIPI). The chain crosses the membrane as a helical span at residues 309 to 332 (MGIVAGLVVLAAVVTGAAVAAVLW). Over 333–338 (RKKSSD) the chain is Cytoplasmic.

This sequence belongs to the MHC class I family. Heterodimer of an alpha chain and a beta chain (beta-2-microglobulin). Homodimer; disulfide-linked. Binds to LILRB1 and LILRB2.

Its subcellular location is the cell membrane. Involved in the presentation of foreign antigens to the immune system. The polypeptide is Patr class I histocompatibility antigen, alpha chain G (Patr-G) (Pan troglodytes (Chimpanzee)).